Reading from the N-terminus, the 452-residue chain is Solute carrier family 52, riboflavin transporter, member 3-B (452 aa).

The next 5 membrane-spanning stretches (helical) occupy residues leucine 11–valine 31, tryptophan 38–isoleucine 58, proline 73–tryptophan 93, leucine 111–methionine 131, and leucine 138–valine 158. Asparagine 168, asparagine 174, asparagine 179, and asparagine 193 each carry an N-linked (GlcNAc...) asparagine glycan. 6 consecutive transmembrane segments (helical) span residues phenylalanine 199–leucine 219, valine 285–valine 305, alanine 321–isoleucine 341, leucine 344–methionine 364, alanine 381–isoleucine 401, and alanine 412–phenylalanine 432.

It belongs to the riboflavin transporter family.

It is found in the cell membrane. The catalysed reaction is riboflavin(in) = riboflavin(out). Functionally, plasma membrane transporter mediating the uptake by cells of the water soluble vitamin B2/riboflavin that plays a key role in biochemical oxidation-reduction reactions of the carbohydrate, lipid, and amino acid metabolism. This chain is Solute carrier family 52, riboflavin transporter, member 3-B (slc52a3b), found in Danio rerio (Zebrafish).